Here is an 832-residue protein sequence, read N- to C-terminus: Protein P (832 aa).

The terminal protein domain (TP) stretch occupies residues 1–177; that stretch reads MPLSYQHFRK…FCGSPYSWEQ (177 aa). Residues 178–335 form a spacer region; that stretch reads ELQHGAESFN…HCLSHLVNLL (158 aa). Composition is skewed to polar residues over residues 205–220 and 251–263; these read SKHQ…QQGQ and SGHN…ESAS. Residues 205 to 263 are disordered; that stretch reads SKHQQSRLGLQPQQGQLAKGQRGRSGSVRSRAHSATRRSVGVEPSGSGHNNNSASESAS. Residues 336–679 form a polymerase/reverse transcriptase domain (RT) region; it reads EDWGPCTEHG…YATLYPVARQ (344 aa). The region spanning 346 to 589 is the Reverse transcriptase domain; sequence KHHIRIPRTP…YSLNFMGYVI (244 aa). Residues Asp-418, Asp-540, and Asp-541 each contribute to the Mg(2+) site.

This sequence belongs to the hepadnaviridae P protein family.

The enzyme catalyses DNA(n) + a 2'-deoxyribonucleoside 5'-triphosphate = DNA(n+1) + diphosphate. The catalysed reaction is Endonucleolytic cleavage to 5'-phosphomonoester.. With respect to regulation, activated by host HSP70 and HSP40 in vitro to be able to bind the epsilon loop of the pgRNA. Because deletion of the RNase H region renders the protein partly chaperone-independent, the chaperones may be needed indirectly to relieve occlusion of the RNA-binding site by this domain. Inhibited by several reverse-transcriptase inhibitors: Lamivudine, Adefovir and Entecavir. Multifunctional enzyme that converts the viral RNA genome into dsDNA in viral cytoplasmic capsids. This enzyme displays a DNA polymerase activity that can copy either DNA or RNA templates, and a ribonuclease H (RNase H) activity that cleaves the RNA strand of RNA-DNA heteroduplexes in a partially processive 3'- to 5'-endonucleasic mode. Neo-synthesized pregenomic RNA (pgRNA) are encapsidated together with the P protein, and reverse-transcribed inside the nucleocapsid. Initiation of reverse-transcription occurs first by binding the epsilon loop on the pgRNA genome, and is initiated by protein priming, thereby the 5'-end of (-)DNA is covalently linked to P protein. Partial (+)DNA is synthesized from the (-)DNA template and generates the relaxed circular DNA (RC-DNA) genome. After budding and infection, the RC-DNA migrates in the nucleus, and is converted into a plasmid-like covalently closed circular DNA (cccDNA). The activity of P protein does not seem to be necessary for cccDNA generation, and is presumably released from (+)DNA by host nuclear DNA repair machinery. The polypeptide is Protein P (Gorilla gorilla (western gorilla)).